Here is a 2190-residue protein sequence, read N- to C-terminus: MASSALTPVAIVGYACKLPGDVSSPDDLWELCSRGRTGWGPTPSTRYSKDAYYHPAPGKHGCINTEGGYFLKEDPARFDAPFFNMTIQEATALDPQQRLLLECTFEAFENSGMTKEGIAGKDIGVFVGGSFADYEVNNTRDIDTAPTYQATGCAPAMQSNRLSYYFDLRGPSMTVDTACSSSLVALHSAMQSLRNGESSSAVVAAAHLNLTPDFFVTMSNTQLLNDAGKTFAFDHRAISGFARGEGAGSMILKPLDAAIRDGDVIRAVIHNSGVNQDGKTNGITVPNGRAQSDLIKQVYSKAGLDPAECGFSECHGTGTKVGDPIEVAGIHEALGAGRSPRNPLFIGSVKSNVGHLEGASGIVSVIKAAMMLEKGMVLPNANFETANPNIPLEQYNMKVPTSTRPWPRGKKYVSVSNYGFGGANAHVVLGAAPKGLKTTMTTIRSLEDAPEEPLCKLFVLSAHDSQALQKEITDLGVFLEQRPEVFEKLLAGNVAYTLGERRSHLPCRLAIAAVSSDELGQSLATTKVPTFRARNEPTLGFVFTGQGAQWATMGAELARDYPIFAAALDTADDTLKALGADFSLKEEMLKPADISLINAAHISQPACTALQIALTMLLSSWGIHPAAVVGHSSGEIGCAFAAGIIGLEDAMKIAYYRGQCMLSLKKKAVGKPQGTMMAVGTSAENVRPLLDAVSKGYITVACINSPASVTLSGDVEAVEELQPILTEKSIFNRQLKVGVAYHSAHLEPVVDEYLDLIKNIQPASTATATFYSSLLGRVAEASELTPEYWVQNLTSPVRFSGGLSAMARETGSKTIDHLVELGPHSALQGPIRDTLATIDAAKGKMHYVSVLARGQNASECALRMAGALYMKGLSLTFGEINFPRTKSVNQKLITDLPRYPFNHETRYWHESRLAQKHCFKEGGRNDLLGSLADWSNDLEPTWRNIVKLDDLPFLRSHKMQDMPVFPMAGYMGMALEAAARRAIARGVQFDRFEIREFVVSSALVFNEDTDVEMTITLKPYSEGLRGAASDLWDDYKICSWDAKRGWLQHCHGLVGVRNSPAANAVDAHRIQSASKAFEACKASIISASTETVDVQAMYNTLTTIGAGYGPVFTGLEPCQASDTTAHAQLVVPDTKSLMPKGYETELIVHPALLDQIIQIVWPIFGAGRQGLDTLYMPTFVKNFSISRNFASMLGNGLEVFGAGAPNNEAPEPTKFGFFVVGSSDASEPLVQFDGLTMTPLRESSGSSGPQARELCYKIDWQTVSDEDIGLEKSSSDASDTPIKADSLVSTPFTRDEAVCVVYNKATEKDLAAEVADNVWKTSGVQAELVTLSKVIPADKRVIFVSTGNNVLSGIDATMFGTLRQMLLSARKVLWIYKEGPDVDDVDGSMVVGFTRAIRSETSANIVTLGLQQATGKTLVENIFTVLTKTSADSPSTFKDDKEFILKGDDLLVPKVVDDEELNVRLHQESQDSVIYQQPFAQSDRRLKMVIATLGSLDSFYFVDDEPKPLNDNEVEIEVKATGMNFKDVVVSMGQLNQPYIGVECAGVIAAVGKKVTDVKVGQSVMAMTEGAYSTYARCLSTSVAPLPEKMDFTAASTIPVVFCTAYYGLFDLGRLTEGESVLIHAAAGGVGQAAIMLAQTCGAEIFATVGSLDKKQHIVKEYGIPEDHIFYSRDTAFGPAIRQVTGGKGVDVVLNSLGGDFLRESWDCLAPFGRFIEIGKADITKNSRLEMAQFEYNVSFASVDLTKVAAYKPKLMKRLLNDVEKLMSSGSIRPVGPITSYGINDVEAAFRSLQSGKSMGKLVIAPQSGDSVQAIAPKKTATLFKEDASYLIVGGTGGLGCSIARWMASRGAKHICLSSRRANITPRLEALITDLSILGTKVSVRACDVADAGSVETLVKDLKKESPIRGVIQGAMVLKDVLYEQMTLDDFSAVVNPKVAGTLNLHNSLGTSELDFFIALSSVAGVVGNRGQAAYAAANVFLDTFMAHRKAQGLPGTSLDLTAVSDVGYLADNSERAADVLRNLGGETIEESEILGLLTAAVTGKITASNNHVITGLKINPGSEPFWCHDAKFSNLLAAAASQSSAEGGNANIPLPQALKSAANGEKALEVLYGALVTKLAAVLMLSVEEMEPSAAVASYSLDSLAAIEVRNWIAREADANVQVLELLTSPSLMELAKLISKKSKLVSFE.

The Ketosynthase family 3 (KS3) domain maps to 6-431 (LTPVAIVGYA…GANAHVVLGA (426 aa)). Catalysis depends on for beta-ketoacyl synthase activity residues Cys-179, His-315, and His-355. In terms of domain architecture, Malonyl-CoA:ACP transacylase (MAT) spans 541–857 (FVFTGQGAQW…VSVLARGQNA (317 aa)). Positions 925–1061 (NDLLGSLADW…GLVGVRNSPA (137 aa)) are N-terminal hotdog fold. A PKS/mFAS DH domain is found at 925–1246 (NDLLGSLADW…MTPLRESSGS (322 aa)). His-957 acts as the Proton acceptor; for dehydratase activity in catalysis. The tract at residues 1089-1246 (TETVDVQAMY…MTPLRESSGS (158 aa)) is C-terminal hotdog fold. The Proton donor; for dehydratase activity role is filled by Asp-1154. The Enoyl reductase (ER) domain occupies 1494-1804 (GSLDSFYFVD…SGKSMGKLVI (311 aa)). In terms of domain architecture, Ketoreductase (KR) spans 1828 to 2005 (ASYLIVGGTG…GTSLDLTAVS (178 aa)). Residues 2107–2184 (KALEVLYGAL…ELAKLISKKS (78 aa)) form the Carrier domain. Ser-2144 carries the post-translational modification O-(pantetheine 4'-phosphoryl)serine.

Pantetheine 4'-phosphate is required as a cofactor.

Functionally, highly-reducing polyketide synthase; part of the gene cluster that mediates the biosynthesis of liamocins, glycolipids (also called heavy oils) composed of a single mannitol or arabitol headgroup linked to either three, four or even six 3,5-dihydroxydecanoic ester tail-groups. Within the pathway, PKS1 is responsible for biosynthesis of 3,5-dihydroxydecanoic acid from acetyl-CoA and malonyl-CoA. A phosphopantetheine transferase (PPTase) activates the HR-PKS. The esterase EST1 then catalyzes ester bond formation between 3,5-dihydroxydecanoic acid and mannitol (provided by the mannitol-1-phosphate 5-dehydrogenase and the NADP-dependent mannitol dehydrogenase) or arabinol (provided by the L-arabinitol 4-dehydrogenase). The protein is Highly-reducing polyketide synthase 1 of Aureobasidium melanogenum (Aureobasidium pullulans var. melanogenum).